The primary structure comprises 38 residues: Cytochrome b6-f complex subunit 5 (38 aa).

The helical transmembrane segment at 5–25 threads the bilayer; that stretch reads LVLGLVMGLVPITLAGLFVAA.

Belongs to the PetG family. The 4 large subunits of the cytochrome b6-f complex are cytochrome b6, subunit IV (17 kDa polypeptide, PetD), cytochrome f and the Rieske protein, while the 4 small subunits are PetG, PetL, PetM and PetN. The complex functions as a dimer.

It localises to the cellular thylakoid membrane. Component of the cytochrome b6-f complex, which mediates electron transfer between photosystem II (PSII) and photosystem I (PSI), cyclic electron flow around PSI, and state transitions. PetG is required for either the stability or assembly of the cytochrome b6-f complex. The polypeptide is Cytochrome b6-f complex subunit 5 (Gloeothece citriformis (strain PCC 7424) (Cyanothece sp. (strain PCC 7424))).